The following is an 86-amino-acid chain: Bradykinin-potentiating peptide 25.12 (86 aa).

Residues 1–22 (MNKRVLLVIFFVTLLIADEVNS) form the signal peptide. Residues 67 to 86 (APAAAAAPEEPPVEQRRRRR) are disordered.

Belongs to the non-disulfide-bridged peptide (NDBP) superfamily. Long chain multifunctional peptide (group 2) family. Expressed by the venom gland.

It localises to the secreted. Inhibits angiotensin-converting enzyme (ACE), but does not serve as substrate for the enzyme. Potentiates bradykinin (BK) on the isolated guinea pig ileum as well as the isolated rat uterus for contraction. Also potentiates in vivo the depressor effect of BK on arterial blood pressure in the normotensive anesthetized rat. The protein is Bradykinin-potentiating peptide 25.12 of Lychas mucronatus (Chinese swimming scorpion).